We begin with the raw amino-acid sequence, 251 residues long: UDP-Glc:alpha-D-GlcNAc-diphosphoundecaprenol beta-1,3-glucosyltransferase WfaP (251 aa).

Belongs to the glycosyltransferase 2 family. Mn(2+) is required as a cofactor. Requires Mg(2+) as cofactor.

The protein resides in the cell inner membrane. It carries out the reaction N-acetyl-alpha-D-glucosaminyl-di-trans,octa-cis-undecaprenyl diphosphate + UDP-alpha-D-glucose = beta-D-Glc-(1-&gt;3)-alpha-D-GlcNAc-di-trans,octa-cis-undecaprenyl diphosphate + UDP + H(+). Its pathway is bacterial outer membrane biogenesis; lipopolysaccharide biosynthesis. Its function is as follows. Catalyzes the addition of Glc, the second sugar moiety of the O56-antigen repeating unit, to GlcNAc-pyrophosphate-undecaprenol. This is UDP-Glc:alpha-D-GlcNAc-diphosphoundecaprenol beta-1,3-glucosyltransferase WfaP (wfaP) from Escherichia coli.